The chain runs to 462 residues: G-patch domain and KOW motifs-containing protein homolog 1 (462 aa).

Disordered stretches follow at residues 1 to 26 (MVEQTTSEPAAGSMPKISFGVKKREE) and 182 to 218 (LKLPNRRPPGLGLGATPKNPVGKNKNTGESSKAEEEK). Positions 154–202 (IESFGLAILRGCNWKDGDGIGKNPQKVALKLPNRRPPGLGLGATPKNPV) constitute a G-patch domain. The KOW 1 domain maps to 221–248 (EIKVGSFIKVVDGRNKGVYGKVEGRDDD). Residues 289–305 (EYDKEKDRLETERKKLE) show a composition bias toward basic and acidic residues. Positions 289 to 337 (EYDKEKDRLETERKKLESQPPSTSTSQSSKDYKSKSSSSKHDKNSSEYE) are disordered. Positions 306-317 (SQPPSTSTSQSS) are enriched in low complexity. Over residues 318 to 337 (KDYKSKSSSSKHDKNSSEYE) the composition is skewed to basic and acidic residues. The KOW 2 domain occupies 401–428 (PREIGEKLMIVAGKRSGQLAVMLDKDKR).

This sequence belongs to the MOS2 family.

The protein resides in the nucleus. This Caenorhabditis elegans protein is G-patch domain and KOW motifs-containing protein homolog 1.